Consider the following 717-residue polypeptide: Eukaryotic translation initiation factor 3 subunit B (717 aa).

Residues 1 to 89 (MTVEDNLDID…VFIEYETGEM (89 aa)) form a sufficient for interaction with HCR1 and TIF32 region. A sufficient for interaction with PIC8 region spans residues 1 to 216 (MTVEDNLDID…GVQLWGGPDW (216 aa)). Residues 28–115 (SFIVVDGAPV…HKLLVNKLSE (88 aa)) form the RRM domain. WD repeat units lie at residues 183 to 221 (RERW…PPIC), 223 to 284 (FQHP…PVRT), 293 to 332 (GASM…LLDK), 445 to 484 (ELKD…NRHT), 506 to 549 (FDKK…DRKH), and 564 to 609 (SEHY…QREE).

It belongs to the eIF-3 subunit B family. As to quaternary structure, component of the eukaryotic translation initiation factor 3 (eIF-3) complex.

The protein resides in the cytoplasm. Functionally, RNA-binding component of the eukaryotic translation initiation factor 3 (eIF-3) complex, which is involved in protein synthesis of a specialized repertoire of mRNAs and, together with other initiation factors, stimulates binding of mRNA and methionyl-tRNAi to the 40S ribosome. The eIF-3 complex specifically targets and initiates translation of a subset of mRNAs involved in cell proliferation. This chain is Eukaryotic translation initiation factor 3 subunit B, found in Yarrowia lipolytica (strain CLIB 122 / E 150) (Yeast).